The sequence spans 514 residues: 2,3-bisphosphoglycerate-independent phosphoglycerate mutase (514 aa).

Mn(2+) is bound by residues aspartate 14 and serine 64. Residue serine 64 is the Phosphoserine intermediate of the active site. Residues histidine 125, 155 to 156, arginine 187, arginine 193, 263 to 266, and lysine 336 contribute to the substrate site; these read RD and RADR. Aspartate 403, histidine 407, aspartate 444, histidine 445, and histidine 463 together coordinate Mn(2+).

The protein belongs to the BPG-independent phosphoglycerate mutase family. Monomer. Requires Mn(2+) as cofactor.

It carries out the reaction (2R)-2-phosphoglycerate = (2R)-3-phosphoglycerate. Its pathway is carbohydrate degradation; glycolysis; pyruvate from D-glyceraldehyde 3-phosphate: step 3/5. In terms of biological role, catalyzes the interconversion of 2-phosphoglycerate and 3-phosphoglycerate. The polypeptide is 2,3-bisphosphoglycerate-independent phosphoglycerate mutase (Shewanella sp. (strain MR-7)).